The sequence spans 318 residues: Methionyl-tRNA formyltransferase (318 aa).

112–115 (SILP) is a (6S)-5,6,7,8-tetrahydrofolate binding site.

This sequence belongs to the Fmt family.

It carries out the reaction L-methionyl-tRNA(fMet) + (6R)-10-formyltetrahydrofolate = N-formyl-L-methionyl-tRNA(fMet) + (6S)-5,6,7,8-tetrahydrofolate + H(+). In terms of biological role, attaches a formyl group to the free amino group of methionyl-tRNA(fMet). The formyl group appears to play a dual role in the initiator identity of N-formylmethionyl-tRNA by promoting its recognition by IF2 and preventing the misappropriation of this tRNA by the elongation apparatus. The sequence is that of Methionyl-tRNA formyltransferase from Shewanella baltica (strain OS155 / ATCC BAA-1091).